Reading from the N-terminus, the 162-residue chain is Probable chemoreceptor glutamine deamidase CheD (162 aa).

It belongs to the CheD family.

The enzyme catalyses L-glutaminyl-[protein] + H2O = L-glutamyl-[protein] + NH4(+). Functionally, probably deamidates glutamine residues to glutamate on methyl-accepting chemotaxis receptors (MCPs), playing an important role in chemotaxis. In Clostridium novyi (strain NT), this protein is Probable chemoreceptor glutamine deamidase CheD.